Here is a 727-residue protein sequence, read N- to C-terminus: Adhesion G protein-coupled receptor L4 (727 aa).

Positions 1–19 are cleaved as a signal peptide; sequence MKLLLFAAWFSSLLDPCRF. Residues 20 to 467 are Extracellular-facing; that stretch reads LDICQSCHPN…LAHYNVLTRI (448 aa). The EGF-like 1; calcium-binding domain maps to 52–90; that stretch reads DDNECETVPEICGLHANCTNYVGGYYCNCLSGFISNGTE. 6 disulfide bridges follow: Cys56–Cys69, Cys63–Cys78, Cys106–Cys118, Cys112–Cys127, Cys408–Cys438, and Cys426–Cys440. Positions 102 to 139 constitute an EGF-like 2; calcium-binding domain; the sequence is DINECEEDRKCGPNSKCHNNIGSFICSCLRGYTSPAGP. The GAIN-B domain occupies 282–456; sequence TQMQVHAGDV…AILMSSARAN (175 aa). A GPS region spans residues 408–456; that stretch reads CAFWEYSPSMMGHWSLDGCIRTRVNTTHTSCSCNHLTHFAILMSSARAN. The helical transmembrane segment at 468-488 threads the bilayer; that stretch reads TQLGMVISLICLSMCIFTFWF. Residues 489–496 lie on the Cytoplasmic side of the membrane; sequence FRDIQNTR. A helical membrane pass occupies residues 497–517; the sequence is TTIHKNLCCSLFMAQFIFLIG. The Extracellular segment spans residues 518 to 535; the sequence is INKSAHKWFCSLIAGLLH. The chain crosses the membrane as a helical span at residues 536-556; the sequence is YFFLAAFAWMCIEGIHLYLIV. Over 557–568 the chain is Cytoplasmic; it reads VGVIYNKGFLHR. Residues 569-589 form a helical membrane-spanning segment; it reads NFYAFGYGSPAVVVAISATLG. At 590 to 609 the chain is on the extracellular side; sequence YKYYGTSSVCWLSTENNFIW. A helical membrane pass occupies residues 610 to 630; the sequence is SFIGPAILIILVNLLAFAVII. At 631–654 the chain is on the cytoplasmic side; it reads YKVYRHTAVKKPEISHYENIRSCA. Residues 655–675 form a helical membrane-spanning segment; it reads RGAIALLFVLGVTWAFGVMYI. Over 676–682 the chain is Extracellular; the sequence is LYETTLT. A helical membrane pass occupies residues 683–703; the sequence is AYLFTFANVFQGMFIFIFLCV.

It belongs to the G-protein coupled receptor 2 family. Adhesion G-protein coupled receptor (ADGR) subfamily. In terms of assembly, heterodimer of 2 chains generated by proteolytic processing; the large extracellular N-terminal fragment and the membrane-bound C-terminal fragment predominantly remain associated and non-covalently linked. In terms of processing, autoproteolytically processed at the GPS region of the GAIN-B domain; this cleavage modulates receptor activity.

Its subcellular location is the cell membrane. Its function is as follows. Orphan receptor that plays a role in vessel formation. In Danio rerio (Zebrafish), this protein is Adhesion G protein-coupled receptor L4.